The sequence spans 367 residues: MEAIAKRLDACQDQLLELYEENSIDIHKHIMHWKCIRLESVLLHKAKQMGLSHIGLQVVPPLTVSETKGHNAIEMQMHLESLAKTQYGVEPWTLQDTSYEMWLTPPKRCFKKQGNTVEVKFDGCEDNVMEYVVWTHIYLQDNDSWVKVTSSVDAKGIYYTCGQFKTYYVNFNKEAQKYGSTNHWEVCYGSTVICSPASVSSTVREVSIAEPTTYTPAQTTAPTVSACTTEDGVSAPPRKRARGPSTNNTLCVANIRSVDSTINNIVTDNYNKHQRRNNCHSAATPIVQLQGDSNCLKCFRYRLNDKYKHLFELASSTWHWASPEAPHKNAIVTLTYSSEEQRQQFLNSVKIPPTIRHKVGFMSLHLL.

The transactivation domain stretch occupies residues 1 to 200 (MEAIAKRLDA…TVICSPASVS (200 aa)). Positions 225 to 246 (SACTTEDGVSAPPRKRARGPST) are disordered. Residues 283 to 367 (ATPIVQLQGD…KVGFMSLHLL (85 aa)) form a DNA-binding domain region.

This sequence belongs to the papillomaviridae E2 protein family. As to quaternary structure, binds DNA as homodimer. Interacts with protein E1; this interaction greatly increases E1 DNA-binding activity. Interacts with protein L1; this interaction enhances E2-dependent replication and transcription activation. Interacts with protein L2; this interaction inhibits E2 transcriptional activity but not DNA replication function E2. Interacts with protein E7; this interaction inhibits E7 oncogenic activity. Interacts with host TAF1; this interaction modulates E2-dependent transcriptional regulation. Interacts with host BRD4; this interaction mediates E2 transcriptional activation function. Additionally, the interaction with host BRD4 on mitotic chromosomes mediates tethering of the viral genome. Interacts with host TOPBP1; this interaction is required for optimal viral DNA replication. In terms of processing, phosphorylated.

The protein resides in the host nucleus. In terms of biological role, plays a role in the initiation of viral DNA replication. A dimer of E2 interacts with a dimer of E1 in order to improve specificity of E1 DNA binding activity. Once the complex recognizes and binds DNA at specific sites, the E2 dimer is removed from DNA. E2 also regulates viral transcription through binding to the E2RE response element (5'-ACCNNNNNNGGT-3') present in multiple copies in the regulatory regions of the viral genome. Activates or represses transcription depending on E2RE's position with regards to proximal promoter elements including the TATA-box. Repression occurs by sterically hindering the assembly of the transcription initiation complex. The sequence is that of Regulatory protein E2 from Human papillomavirus 11.